We begin with the raw amino-acid sequence, 91 residues long: MQPRVLLAVTLLALLVSARAEEIQESSLLGVMKDYMQQASKTANEMLTKVQESQVAENAREWMTESLDSMKGYWTSLIGRLSGFLDSTPSS.

The first 20 residues, 1 to 20, serve as a signal peptide directing secretion; the sequence is MQPRVLLAVTLLALLVSARA. A Methionine sulfoxide modification is found at M63. The lipid-binding stretch occupies residues 68 to 91; it reads DSMKGYWTSLIGRLSGFLDSTPSS.

Belongs to the apolipoprotein C3 family.

It localises to the secreted. Component of triglyceride-rich very low density lipoproteins (VLDL) and high density lipoproteins (HDL) in plasma. Plays a multifaceted role in triglyceride homeostasis. Intracellularly, promotes hepatic very low density lipoprotein 1 (VLDL1) assembly and secretion; extracellularly, attenuates hydrolysis and clearance of triglyceride-rich lipoproteins (TRLs). Impairs the lipolysis of TRLs by inhibiting lipoprotein lipase and the hepatic uptake of TRLs by remnant receptors. Formed of several curved helices connected via semiflexible hinges, so that it can wrap tightly around the curved micelle surface and easily adapt to the different diameters of its natural binding partners. The protein is Apolipoprotein C-III (APOC3) of Cavia porcellus (Guinea pig).